We begin with the raw amino-acid sequence, 524 residues long: M-phase inducer phosphatase 1 (524 aa).

Positions 74–84 (MGSSESTDSGF) match the Phosphodegron motif. At Ser76 the chain carries Phosphoserine; by CHEK1. Phosphoserine; by NEK11 is present on residues Ser79, Ser82, and Ser88. Ser107 is modified (phosphoserine). The residue at position 124 (Ser124) is a Phosphoserine; by CHEK1 and CHEK2. A KEN box motif is present at residues 141 to 143 (KEN). The residue at position 178 (Ser178) is a Phosphoserine; by CHEK1. The segment at 264 to 317 (LCSSSTRSVLKRPERSQEESPPGSTKRRKSMSGASPKESTNPEKAHETLHQSLS) is disordered. 2 positions are modified to phosphoserine; by CHEK1 and CHEK2: Ser279 and Ser293. Residues 303–312 (TNPEKAHETL) show a composition bias toward basic and acidic residues. Position 321 is a phosphoserine (Ser321). In terms of domain architecture, Rhodanese spans 376-482 (LIKEFVIIDC…FFMKCQSYCE (107 aa)). Cys431 is an active-site residue. Phosphothreonine; by CHEK1 is present on Thr507. Ser513 and Ser519 each carry phosphoserine; by PLK3.

The protein belongs to the MPI phosphatase family. Interacts with CCNB1/cyclin B1. Interacts with YWHAE/14-3-3 epsilon when phosphorylated. Interacts with CUL1 specifically when CUL1 is neddylated and active. Interacts with BTRC/BTRCP1 and FBXW11/BTRCP2. Interactions with CUL1, BTRC and FBXW11 are enhanced upon DNA damage. Interacts with CHEK2; mediates CDC25A phosphorylation and degradation in response to infrared-induced DNA damages. Interacts with HSP90AB1; prevents heat shock-mediated CDC25A degradation and contributes to cell cycle progression. Post-translationally, phosphorylated by CHEK1 on Ser-76, Ser-124, Ser-178, Ser-279, Ser-293 and Thr-507 during checkpoint mediated cell cycle arrest. Also phosphorylated by CHEK2 on Ser-124, Ser-279, and Ser-293 during checkpoint mediated cell cycle arrest. Phosphorylation on Ser-178 and Thr-507 creates binding sites for YWHAE/14-3-3 epsilon which inhibits CDC25A. Phosphorylation on Ser-76, Ser-124, Ser-178, Ser-279 and Ser-293 may also promote ubiquitin-dependent proteolysis of CDC25A by the SCF complex. Phosphorylation of CDC25A at Ser-76 by CHEK1 primes it for subsequent phosphorylation at Ser-79, Ser-82 and Ser-88 by NEK11. Phosphorylation by NEK11 is required for BTRC-mediated polyubiquitination and degradation. Phosphorylation by PIM1 leads to an increase in phosphatase activity. Phosphorylated by PLK3 following DNA damage, leading to promote its ubiquitination and degradation. Ubiquitinated by the anaphase promoting complex/cyclosome (APC/C) ubiquitin ligase complex that contains FZR1/CDH1 during G1 phase leading to its degradation by the proteasome. Ubiquitinated by a SCF complex containing BTRC and FBXW11 during S phase leading to its degradation by the proteasome. Deubiquitination by USP17L2/DUB3 leads to its stabilization.

It carries out the reaction O-phospho-L-tyrosyl-[protein] + H2O = L-tyrosyl-[protein] + phosphate. With respect to regulation, stimulated by B-type cyclins. Stimulated by PIM1-mediated phosphorylation. Tyrosine protein phosphatase which functions as a dosage-dependent inducer of mitotic progression. Directly dephosphorylates CDK1 and stimulates its kinase activity. Also dephosphorylates CDK2 in complex with cyclin-E, in vitro. In Homo sapiens (Human), this protein is M-phase inducer phosphatase 1 (CDC25A).